Consider the following 436-residue polypeptide: Trigger factor (436 aa).

Residues 163–248 form the PPIase FKBP-type domain; the sequence is GDRATIDFEG…VKKIEAAHLP (86 aa).

The protein belongs to the FKBP-type PPIase family. Tig subfamily.

The protein resides in the cytoplasm. The enzyme catalyses [protein]-peptidylproline (omega=180) = [protein]-peptidylproline (omega=0). Functionally, involved in protein export. Acts as a chaperone by maintaining the newly synthesized protein in an open conformation. Functions as a peptidyl-prolyl cis-trans isomerase. In Polaromonas sp. (strain JS666 / ATCC BAA-500), this protein is Trigger factor.